Consider the following 362-residue polypeptide: Chorismate synthase (362 aa).

Arg-46 is an NADP(+) binding site. FMN contacts are provided by residues Arg-122 to Ser-124, Asn-238 to Ala-239, Gly-278, Lys-293 to Ser-297, and Arg-319.

Belongs to the chorismate synthase family. Homotetramer. Requires FMNH2 as cofactor.

It carries out the reaction 5-O-(1-carboxyvinyl)-3-phosphoshikimate = chorismate + phosphate. Its pathway is metabolic intermediate biosynthesis; chorismate biosynthesis; chorismate from D-erythrose 4-phosphate and phosphoenolpyruvate: step 7/7. Functionally, catalyzes the anti-1,4-elimination of the C-3 phosphate and the C-6 proR hydrogen from 5-enolpyruvylshikimate-3-phosphate (EPSP) to yield chorismate, which is the branch point compound that serves as the starting substrate for the three terminal pathways of aromatic amino acid biosynthesis. This reaction introduces a second double bond into the aromatic ring system. The protein is Chorismate synthase of Campylobacter jejuni subsp. jejuni serotype O:23/36 (strain 81-176).